Reading from the N-terminus, the 116-residue chain is Protein Rev (116 aa).

Ser5 and Ser8 each carry phosphoserine; by host CK2. The tract at residues 18-26 (IIKILYQSN) is homomultimerization. Residues 24-49 (QSNPHPSPEGTRQARRNRRRRWRERQ) are disordered. The short motif at 34 to 50 (TRQARRNRRRRWRERQR) is the Nuclear localization signal and RNA-binding (RRE) element. Over residues 36 to 47 (QARRNRRRRWRE) the composition is skewed to basic residues. The Nuclear export signal and binding to XPO1 motif lies at 73-84 (LQLPPLDRLTLD). Residues Ser92 and Ser99 each carry the phosphoserine; by host modification.

The protein belongs to the HIV-1 REV protein family. In terms of assembly, homomultimer; when bound to the RRE. Multimeric assembly is essential for activity and may involve XPO1. Binds to human KPNB1, XPO1, TNPO1, RANBP5 and IPO7. Interacts with the viral Integrase. Interacts with human KHDRBS1. Interacts with human NAP1; this interaction decreases Rev multimerization and stimulates its activity. Interacts with human DEAD-box helicases DDX3 and DDX24; these interactions may serve for viral RNA export to the cytoplasm and packaging, respectively. Interacts with human PSIP1; this interaction may inhibit HIV-1 DNA integration by promoting dissociation of the Integrase-LEDGF/p75 complex. Asymmetrically arginine dimethylated at one site by host PRMT6. Methylation impairs the RNA-binding activity and export of viral RNA from the nucleus to the cytoplasm. In terms of processing, phosphorylated by protein kinase CK2. Presence of, and maybe binding to the N-terminus of the regulatory beta subunit of CK2 is necessary for CK2-mediated Rev's phosphorylation.

It localises to the host nucleus. The protein resides in the host nucleolus. It is found in the host cytoplasm. Its function is as follows. Escorts unspliced or incompletely spliced viral pre-mRNAs (late transcripts) out of the nucleus of infected cells. These pre-mRNAs carry a recognition sequence called Rev responsive element (RRE) located in the env gene, that is not present in fully spliced viral mRNAs (early transcripts). This function is essential since most viral proteins are translated from unspliced or partially spliced pre-mRNAs which cannot exit the nucleus by the pathway used by fully processed cellular mRNAs. Rev itself is translated from a fully spliced mRNA that readily exits the nucleus. Rev's nuclear localization signal (NLS) binds directly to KPNB1/Importin beta-1 without previous binding to KPNA1/Importin alpha-1. KPNB1 binds to the GDP bound form of RAN (Ran-GDP) and targets Rev to the nucleus. In the nucleus, the conversion from Ran-GDP to Ran-GTP dissociates Rev from KPNB1 and allows Rev's binding to the RRE in viral pre-mRNAs. Rev multimerization on the RRE via cooperative assembly exposes its nuclear export signal (NES) to the surface. Rev can then form a complex with XPO1/CRM1 and Ran-GTP, leading to nuclear export of the complex. Conversion from Ran-GTP to Ran-GDP mediates dissociation of the Rev/RRE/XPO1/RAN complex, so that Rev can return to the nucleus for a subsequent round of export. Beside KPNB1, also seems to interact with TNPO1/Transportin-1, RANBP5/IPO5 and IPO7/RANBP7 for nuclear import. The nucleoporin-like HRB/RIP is an essential cofactor that probably indirectly interacts with Rev to release HIV RNAs from the perinuclear region to the cytoplasm. The sequence is that of Protein Rev from Human immunodeficiency virus type 1 group M subtype B (isolate SF33) (HIV-1).